Consider the following 286-residue polypeptide: Pantothenate synthetase (286 aa).

31-38 (MGALHDGH) lines the ATP pocket. The active-site Proton donor is H38. Residue Q62 coordinates (R)-pantoate. Residue Q62 coordinates beta-alanine. Residue 148-151 (GKKD) participates in ATP binding. Q154 is a (R)-pantoate binding site. ATP-binding positions include V177 and 185 to 188 (KSSR).

This sequence belongs to the pantothenate synthetase family. In terms of assembly, homodimer.

Its subcellular location is the cytoplasm. It catalyses the reaction (R)-pantoate + beta-alanine + ATP = (R)-pantothenate + AMP + diphosphate + H(+). Its pathway is cofactor biosynthesis; (R)-pantothenate biosynthesis; (R)-pantothenate from (R)-pantoate and beta-alanine: step 1/1. Catalyzes the condensation of pantoate with beta-alanine in an ATP-dependent reaction via a pantoyl-adenylate intermediate. The protein is Pantothenate synthetase of Staphylococcus epidermidis (strain ATCC 35984 / DSM 28319 / BCRC 17069 / CCUG 31568 / BM 3577 / RP62A).